A 655-amino-acid polypeptide reads, in one-letter code: A-type voltage-gated potassium channel KCND3 (655 aa).

Residues 1–182 (MAAGVAAWLP…FENPHTSTLA (182 aa)) lie on the Cytoplasmic side of the membrane. Interaction with KCNIP1 stretches follow at residues 6-21 (AAWL…GWMP) and 70-78 (EKEFFFNED). Zn(2+)-binding residues include histidine 104, cysteine 110, cysteine 131, and cysteine 132. Residue serine 153 is modified to Phosphoserine. The chain crosses the membrane as a helical span at residues 183–204 (LVFYYVTGFFIAVSVITNVVET). At 205–223 (VPCGTVPGSKELPCGERYS) the chain is on the extracellular side. Residues 224–246 (VAFFCLDTACVMIFTVEYLLRLF) form a helical membrane-spanning segment. Over 247–253 (AAPSRYR) the chain is Cytoplasmic. A helical membrane pass occupies residues 254-277 (FIRSVMSIIDVVAIMPYYIGLVMT). At 278 to 283 (NNEDVS) the chain is on the extracellular side. Residues 284–306 (GAFVTLRVFRVFRIFKFSRHSQG) form a helical; Voltage-sensor membrane-spanning segment. Over 307–318 (LRILGYTLKSCA) the chain is Cytoplasmic. Residues 319 to 343 (SELGFLLFSLTMAIIIFATVMFYAE) form a helical membrane-spanning segment. The Extracellular segment spans residues 344–352 (KGSSASKFT). Positions 353–366 (SIPASFWYTIVTMT) form an intramembrane region, helical. 4 residues coordinate K(+): threonine 367, leucine 368, glycine 369, and tyrosine 370. The Selectivity filter signature appears at 367 to 372 (TLGYGD). Residues 367–374 (TLGYGDMV) lie within the membrane without spanning it. A helical membrane pass occupies residues 378-400 (IAGKIFGSICSLSGVLVIALPVP). Topologically, residues 401 to 655 (VIVSNFSRIY…TSNVVKVSVL (255 aa)) are cytoplasmic. Threonine 459 carries the post-translational modification Phosphothreonine. Positions 470-487 (SLIESQHHHLLHCLEKTT) are interaction with KCNIP1 and KCNIP2. The segment at 474–489 (SQHHHLLHCLEKTTGL) is mediates dendritic targeting. Positions 523–565 (SSMQNYPSTRSPSLSSHSGLTTTCCSRRSKKTTHLPNSNLPAT) are disordered. Residues 529 to 548 (PSTRSPSLSSHSGLTTTCCS) are compositionally biased toward low complexity. At serine 569 the chain carries Phosphoserine; by CaMK2D. At serine 585 the chain carries Phosphoserine. The interval 616–647 (SIPTPPALTPEGESRPPPASPGPNTNIPSITS) is disordered. Residues 637–647 (GPNTNIPSITS) are compositionally biased toward polar residues.

It belongs to the potassium channel family. D (Shal) (TC 1.A.1.2) subfamily. Kv4.3/KCND3 sub-subfamily. Homotetramer. Heterotetramer with KCND2. Associates with the regulatory subunits KCNIP3 and KCNIP4. Interacts with KCNE1, KCNE2, SCN1B and KCNAB1 and DLG1. Component of heteromultimeric potassium channels. Identified in potassium channel complexes containing KCND1, KCND2, KCND3, KCNIP1, KCNIP2, KCNIP3, KCNIP4, DPP6 and DPP10. Interacts with KCNIP1; each KCNIP1 monomer interacts with two adjacent KCND3 subunits, through both the N-terminal inactivation ball of a KCND3 subunit and a C-terminal helix from the adjacent KCND3 subunit, clamping them together; this interaction stabilizes the tetrameric form and modulates the channel gating kinetics namely channel activation and inactivation kinetics and rate of recovery from inactivation. Interacts with DPP6; this interaction modulates the channel gating kinetics namely channel activation and inactivation kinetics and rate of recovery from inactivation. Interacts with KCNIP2; each KCNIP2 monomer interacts with two adjacent KCND3 subunits, through both the N-terminal inactivation ball of a KCND3 subunit and a C-terminal helix from the adjacent KCND3 subunit, clamping them together; this interaction modulates the channel gating kinetics. Regulated through phosphorylation at Ser-569 by CaMK2D. In terms of tissue distribution, highly expressed in brain, in particular in the retrosplenial cortex, medial habenula, anterior thalamus, hippocampus, cerebellum and lateral geniculate and superior colliculus. Highly expressed in heart atrium (at protein level) and throughout the ventricle wall, in lung and vas deferens.

It localises to the cell membrane. Its subcellular location is the sarcolemma. It is found in the cell projection. The protein resides in the dendrite. It carries out the reaction K(+)(in) = K(+)(out). Functionally, pore-forming (alpha) subunit of voltage-gated A-type potassium channels that mediates transmembrane potassium transport in excitable membranes, in brain and heart. In cardiomyocytes, may generate the transient outward potassium current I(To). In neurons, may conduct the transient subthreshold somatodendritic A-type potassium current (ISA). Kinetics properties are characterized by fast activation at subthreshold membrane potentials, rapid inactivation, and quick recovery from inactivation. Channel properties are modulated by interactions with regulatory subunits. Interaction with the regulatory subunits KCNIP1 or KCNIP2 modulates the channel gating kinetics namely channel activation and inactivation kinetics and rate of recovery from inactivation. Likewise, interaction with DPP6 modulates the channel gating kinetics namely channel activation and inactivation kinetics. The sequence is that of A-type voltage-gated potassium channel KCND3 from Rattus norvegicus (Rat).